Here is a 58-residue protein sequence, read N- to C-terminus: Large ribosomal subunit protein bL32c (58 aa).

A compositionally biased stretch (basic residues) spans 1-19 (MAVPKKRKSKMKTRLRKAQ). The tract at residues 1–25 (MAVPKKRKSKMKTRLRKAQWKSEAS) is disordered.

It belongs to the bacterial ribosomal protein bL32 family.

The protein localises to the plastid. It is found in the chloroplast. This is Large ribosomal subunit protein bL32c (rpl32) from Chlorella vulgaris (Green alga).